Reading from the N-terminus, the 258-residue chain is Glycerol-3-phosphate acyltransferase (258 aa).

Helical transmembrane passes span 11 to 31, 62 to 82, 94 to 114, 124 to 144, 160 to 180, and 212 to 232; these read IILASVIGYFLGSISWSIIIV, LVVAFLDALKVVFTAIVAILL, SYFIPCIFALIGHCYPIYYKF, LGLLFVVNVLYLIIFLIIWFI, ALIILLIMWIPYLSGVSYFIW, and WASGILEGNIIILIGGLILAW.

This sequence belongs to the PlsY family. Probably interacts with PlsX.

It is found in the cell membrane. The enzyme catalyses an acyl phosphate + sn-glycerol 3-phosphate = a 1-acyl-sn-glycero-3-phosphate + phosphate. Its pathway is lipid metabolism; phospholipid metabolism. Functionally, catalyzes the transfer of an acyl group from acyl-phosphate (acyl-PO(4)) to glycerol-3-phosphate (G3P) to form lysophosphatidic acid (LPA). This enzyme utilizes acyl-phosphate as fatty acyl donor, but not acyl-CoA or acyl-ACP. This is Glycerol-3-phosphate acyltransferase from Mycoplasma mycoides subsp. mycoides SC (strain CCUG 32753 / NCTC 10114 / PG1).